The primary structure comprises 276 residues: Phosphate import ATP-binding protein PstB (276 aa).

The ABC transporter domain maps to 23 to 271 (VNNKNIVYDT…PSDQRTEDYI (249 aa)). 62–69 (GPSGCGKS) contacts ATP.

It belongs to the ABC transporter superfamily. Phosphate importer (TC 3.A.1.7) family. As to quaternary structure, the complex is composed of two ATP-binding proteins (PstB), two transmembrane proteins (PstC and PstA) and a solute-binding protein (PstS).

It localises to the cell membrane. It catalyses the reaction phosphate(out) + ATP + H2O = ADP + 2 phosphate(in) + H(+). Its function is as follows. Part of the ABC transporter complex PstSACB involved in phosphate import. Responsible for energy coupling to the transport system. The protein is Phosphate import ATP-binding protein PstB of Oceanobacillus iheyensis (strain DSM 14371 / CIP 107618 / JCM 11309 / KCTC 3954 / HTE831).